The following is a 363-amino-acid chain: 3-dehydroquinate synthase (363 aa).

NAD(+)-binding positions include 103–107, 127–128, K139, K148, and 166–169; these read GAVGD, TT, and FSET. 3 residues coordinate Zn(2+): E181, H243, and H260.

Belongs to the sugar phosphate cyclases superfamily. Dehydroquinate synthase family. Requires Co(2+) as cofactor. The cofactor is Zn(2+). NAD(+) is required as a cofactor.

The protein localises to the cytoplasm. It catalyses the reaction 7-phospho-2-dehydro-3-deoxy-D-arabino-heptonate = 3-dehydroquinate + phosphate. It participates in metabolic intermediate biosynthesis; chorismate biosynthesis; chorismate from D-erythrose 4-phosphate and phosphoenolpyruvate: step 2/7. Functionally, catalyzes the conversion of 3-deoxy-D-arabino-heptulosonate 7-phosphate (DAHP) to dehydroquinate (DHQ). This Lysinibacillus sphaericus (strain C3-41) protein is 3-dehydroquinate synthase.